We begin with the raw amino-acid sequence, 314 residues long: MSTVGSTVSSTPSRRFKHRNVNTFLTYSRCPLEPEAVGLHIWSLIAHWTPVYVLSVRETHEDGGYHIHVLAQSAKPVYTTDSGFFDIDGFHPNIQSAKSANKVRAYAMKNPVTYWERGTFIPRKTSFLGDSTEPNSKKQSKDDIVRDIIEHSTNKQEYLSMIQKALPYEWATKLQYFEYSANKLFPDIQEIYTSPFPQSTPALLDPTAINTWLENNLYQVSPSAYMLANPSCLTLEEATSDLIWMHETSRTLIPTGSSACTSSGQQEQASPPGPGAWEDIITGRTTSTGPPTTRTQNTTSSTTYPSSTVHAGSN.

Residues 17–120 form the CRESS-DNA virus Rep endonuclease domain; that stretch reads KHRNVNTFLT…PVTYWERGTF (104 aa). An RCR-1 motif is present at residues 24–27; sequence FLTY. The a divalent metal cation site is built by glutamate 58, histidine 66, and histidine 68. The short motif at 66–68 is the RCR-2 element; that stretch reads HIH. The active-site For DNA cleavage activity is tyrosine 106. The RCR-3 motif lies at 106–109; sequence YAMK. Asparagine 110 contacts a divalent metal cation. The oligomerization stretch occupies residues 180-192; the sequence is SANKLFPDIQEIY. The span at 255–269 shows a compositional bias: polar residues; sequence TGSSACTSSGQQEQA. The tract at residues 255-314 is disordered; sequence TGSSACTSSGQQEQASPPGPGAWEDIITGRTTSTGPPTTRTQNTTSSTTYPSSTVHAGSN. The span at 282 to 308 shows a compositional bias: low complexity; the sequence is TGRTTSTGPPTTRTQNTTSSTTYPSST.

The protein belongs to the geminiviridae Rep protein family. Homooligomer. Part of the C- and V-complexes which are RepA-Rep-DNA complexes involved in the c-sense and v-sense transcription. Mg(2+) serves as cofactor. The cofactor is Mn(2+).

The protein resides in the host nucleus. It localises to the host cytoplasm. Functionally, implicated in enhancement of V-sense gene expression. Acts a an inhibitor of C-sense gene transcription. This chain is Replication-associated protein A, found in Cenchrus echinatus (Sugarcane).